The primary structure comprises 156 residues: ATP synthase subunit b (156 aa).

Residues 3-23 (INFTLLAQALAFAGLIWIIAT) form a helical membrane-spanning segment.

Belongs to the ATPase B chain family. As to quaternary structure, F-type ATPases have 2 components, F(1) - the catalytic core - and F(0) - the membrane proton channel. F(1) has five subunits: alpha(3), beta(3), gamma(1), delta(1), epsilon(1). F(0) has three main subunits: a(1), b(2) and c(10-14). The alpha and beta chains form an alternating ring which encloses part of the gamma chain. F(1) is attached to F(0) by a central stalk formed by the gamma and epsilon chains, while a peripheral stalk is formed by the delta and b chains.

It localises to the cell membrane. Functionally, f(1)F(0) ATP synthase produces ATP from ADP in the presence of a proton or sodium gradient. F-type ATPases consist of two structural domains, F(1) containing the extramembraneous catalytic core and F(0) containing the membrane proton channel, linked together by a central stalk and a peripheral stalk. During catalysis, ATP synthesis in the catalytic domain of F(1) is coupled via a rotary mechanism of the central stalk subunits to proton translocation. Its function is as follows. Component of the F(0) channel, it forms part of the peripheral stalk, linking F(1) to F(0). This is ATP synthase subunit b from Stenotrophomonas maltophilia (strain K279a).